A 440-amino-acid chain; its full sequence is Ribosomal protein uS12 methylthiotransferase RimO (440 aa).

An MTTase N-terminal domain is found at 6 to 116 (PKVGFVSLGC…VVTAVHEVVP (111 aa)). C15, C51, C80, C149, C153, and C156 together coordinate [4Fe-4S] cluster. Residues 135 to 373 (LTPRHYAYLK…MAHQQAISAA (239 aa)) enclose the Radical SAM core domain. The region spanning 376-440 (QLKVGKEIEV…DEYDLWAEPV (65 aa)) is the TRAM domain.

Belongs to the methylthiotransferase family. RimO subfamily. The cofactor is [4Fe-4S] cluster.

It localises to the cytoplasm. The catalysed reaction is L-aspartate(89)-[ribosomal protein uS12]-hydrogen + (sulfur carrier)-SH + AH2 + 2 S-adenosyl-L-methionine = 3-methylsulfanyl-L-aspartate(89)-[ribosomal protein uS12]-hydrogen + (sulfur carrier)-H + 5'-deoxyadenosine + L-methionine + A + S-adenosyl-L-homocysteine + 2 H(+). In terms of biological role, catalyzes the methylthiolation of an aspartic acid residue of ribosomal protein uS12. This is Ribosomal protein uS12 methylthiotransferase RimO from Pseudomonas paraeruginosa (strain DSM 24068 / PA7) (Pseudomonas aeruginosa (strain PA7)).